The sequence spans 3184 residues: WD repeat- and FYVE domain-containing protein 4 (3184 aa).

Basic and acidic residues predominate over residues 1–18; sequence MEAEDLSKAEDRNEDPGS. 4 disordered regions span residues 1-39, 944-993, 1837-1869, and 2309-2335; these read MEAEDLSKAEDRNEDPGSKNEGQLAAVQPDVPHGGQSSS, SHTH…QDST, VGAESTRNTSSPEAAAEGDSTVEGLQAPTKAHP, and ALSSGRHKESQDKNDHISQTNAENQDE. Residues 981-993 are compositionally biased toward polar residues; sequence QAPQPLGESQDST. Residues 2314-2324 are compositionally biased toward basic and acidic residues; sequence RHKESQDKNDH. The 126-residue stretch at 2385–2510 folds into the BEACH-type PH domain; that stretch reads LDKEKVTQKF…DRSKAFKSFC (126 aa). The 295-residue stretch at 2527–2821 folds into the BEACH domain; it reads SLRRYPGSDR…QLFTKPHPAR (295 aa). 6 WD repeats span residues 2863 to 2922, 2923 to 2972, 2973 to 3014, 3015 to 3057, 3058 to 3141, and 3142 to 3184; these read MYLF…YGSD, KVLM…PRGL, RLRQ…LDHL, THVT…GQPL, ASIT…ELDV, and SIAL…SADG. Positions 3107–3128 are disordered; that stretch reads SVPGRPAGEEPPAQPPSPRGHK.

Interacts with HSP90AB1.

The protein resides in the early endosome. The protein localises to the endoplasmic reticulum. Functionally, plays a critical role in the regulation of cDC1-mediated cross-presentation of viral and tumor antigens in dendritic cells. Mechanistically, acts near the plasma membrane and interacts with endosomal membranes to promote endosomal-to-cytosol antigen trafficking. Also plays a role in B-cell survival through regulation of autophagy. This Homo sapiens (Human) protein is WD repeat- and FYVE domain-containing protein 4 (WDFY4).